The chain runs to 519 residues: Probable FAD synthase (519 aa).

The interval 17-108 (AILVIGDEIL…TDQMQFSDEI (92 aa)) is molybdenum cofactor biosynthesis protein-like. The FAD synthase stretch occupies residues 328 to 485 (QIALSFNGGK…SLGGRDNTVK (158 aa)).

In the N-terminal section; belongs to the MoaB/Mog family. It in the C-terminal section; belongs to the PAPS reductase family. FAD1 subfamily. Requires Mg(2+) as cofactor.

It carries out the reaction FMN + ATP + H(+) = FAD + diphosphate. It participates in cofactor biosynthesis; FAD biosynthesis; FAD from FMN: step 1/1. Catalyzes the adenylation of flavin mononucleotide (FMN) to form flavin adenine dinucleotide (FAD) coenzyme. The polypeptide is Probable FAD synthase (Caenorhabditis elegans).